A 212-amino-acid chain; its full sequence is MGREFLDIFENWAQSYDSSVYGHDEQYRDVFDGYETILNTVVEKSGNVVLEFGVGTGNLTKKLIEANKTVYGIEPSAPMRELAKEKLGHVTIEDGDFLQFPLPNEPFDTIVSTYAFHHLTDQEKEEAIGKYSTLLRKGGKIVFADTAFINREAYEAMIAEAKQKGFVDLAEDLQREYYTTIPALEHMFTTHGFTVTFTPMNRFVWLMEAVKQ.

S-adenosyl-L-methionine-binding residues include Gly53, Glu74, and Asp96.

Belongs to the methyltransferase superfamily. YrrT family.

Could be a S-adenosyl-L-methionine-dependent methyltransferase. This is an uncharacterized protein from Anoxybacillus flavithermus (strain DSM 21510 / WK1).